Reading from the N-terminus, the 149-residue chain is Large ribosomal subunit protein bL9 (149 aa).

This sequence belongs to the bacterial ribosomal protein bL9 family.

Functionally, binds to the 23S rRNA. This is Large ribosomal subunit protein bL9 from Desulforamulus reducens (strain ATCC BAA-1160 / DSM 100696 / MI-1) (Desulfotomaculum reducens).